Consider the following 93-residue polypeptide: Small ribosomal subunit protein uS19 (93 aa).

This sequence belongs to the universal ribosomal protein uS19 family.

Functionally, protein S19 forms a complex with S13 that binds strongly to the 16S ribosomal RNA. This is Small ribosomal subunit protein uS19 from Dehalococcoides mccartyi (strain ATCC BAA-2266 / KCTC 15142 / 195) (Dehalococcoides ethenogenes (strain 195)).